Consider the following 202-residue polypeptide: Remorin 1.4 (202 aa).

The segment covering 1-10 (MAEEEPKKVT) has biased composition (basic and acidic residues). Positions 1-79 (MAEEEPKKVT…VEEEKKEGSV (79 aa)) are disordered. The span at 25–39 (EKPAAAADVAPQEKP) shows a compositional bias: low complexity. The segment covering 40 to 50 (VAPPPVLPSPA) has biased composition (pro residues). Basic and acidic residues predominate over residues 68 to 79 (KEVEEEKKEGSV). The stretch at 123-169 (ENNKKAAVEAELKKMEEQLEKKKAEYVEQMKNKIAQIHKEAEEKRAM) forms a coiled coil.

Belongs to the remorin family.

This Arabidopsis thaliana (Mouse-ear cress) protein is Remorin 1.4.